The chain runs to 118 residues: MVKMTKSKTFQAYLPHCHRTYSCIHCRAHLANHDELISKSFQGSQGRAYLFNSVVNVGCGPAEERVLLTGLHAVADIYCENCKTTLGWKYEHAFESSQKYKEGKFIIELAHMIKDNGW.

The region spanning 19–116 is the Yippee domain; the sequence is RTYSCIHCRA…IELAHMIKDN (98 aa). Zn(2+)-binding residues include Cys23, Cys26, Cys79, and Cys82. Positions 99 to 104 match the Nuclear localization signal motif; sequence KYKEGK.

This sequence belongs to the yippee family.

It localises to the nucleus. In terms of biological role, may play a role in epithelioid conversion of fibroblasts. This is Protein yippee-like 1 (Ypel1) from Mus musculus (Mouse).